Here is a 530-residue protein sequence, read N- to C-terminus: Glucose-6-phosphate isomerase (530 aa).

The active-site Proton donor is E322. Active-site residues include H351 and K455.

The protein belongs to the GPI family.

Its subcellular location is the cytoplasm. It catalyses the reaction alpha-D-glucose 6-phosphate = beta-D-fructose 6-phosphate. The protein operates within carbohydrate biosynthesis; gluconeogenesis. It functions in the pathway carbohydrate degradation; glycolysis; D-glyceraldehyde 3-phosphate and glycerone phosphate from D-glucose: step 2/4. Catalyzes the reversible isomerization of glucose-6-phosphate to fructose-6-phosphate. In Geotalea daltonii (strain DSM 22248 / JCM 15807 / FRC-32) (Geobacter daltonii), this protein is Glucose-6-phosphate isomerase.